We begin with the raw amino-acid sequence, 542 residues long: Organic anion transporter 3 (542 aa).

The Cytoplasmic segment spans residues 1–20 (MTFSEILDRVGSMGRFQFLH). Position 4 is a phosphoserine (Ser4). Residues 21-41 (VAILGLPILNMANHNLLQIFT) traverse the membrane as a helical segment. The Extracellular portion of the chain corresponds to 42–123 (AATPVHHCRP…LVCNSNKLKE (82 aa)). Asn86 carries an N-linked (GlcNAc...) asparagine glycan. Residues 124–144 (MAQSIFMAGILIGGLVLGDLS) traverse the membrane as a helical segment. Residues 145–154 (DRFGRRPILT) lie on the Cytoplasmic side of the membrane. A helical transmembrane segment spans residues 155 to 175 (CSYLLLAASGSGAAFSPTFPI). A topological domain (extracellular) is located at residue Tyr176. A helical membrane pass occupies residues 177–197 (MVFRFLCGFGISGITLSTVIL). Residues 198–212 (NVEWVPTRMRAIMST) are Cytoplasmic-facing. A helical transmembrane segment spans residues 213–233 (ALGYCYTFGQFILPGLAYAIP). Residues 234 to 236 (QWR) are Extracellular-facing. A helical transmembrane segment spans residues 237 to 257 (WLQLTVSIPFFIFFLSSWWTP). Over 258–327 (ESIRWLVLSG…FRIPMLRRMT (70 aa)) the chain is Cytoplasmic. The helical transmembrane segment at 328 to 348 (FCLSLAWFATGFAYYSLAMGV) threads the bilayer. At 349-354 (EEFGVN) the chain is on the extracellular side. The helical transmembrane segment at 355 to 375 (LYILQIIFGGVDVPAKFITIL) threads the bilayer. Over 376–386 (SLSYLGRHTTQ) the chain is Cytoplasmic. Residues 387–407 (AAALLLAGGAILALTFVPLDL) form a helical membrane-spanning segment. The Extracellular portion of the chain corresponds to 408–471 (QTVRTVLAVF…LVKITGEVQP (64 aa)). Residues 472–492 (FIPNIIYGITALLGGSAAFFL) form a helical membrane-spanning segment. Residues 493-542 (PETLNQPLPETIEDLENWSLRAKKPKQEPEVEKASQRIPLQPHGPGLGSS) lie on the Cytoplasmic side of the membrane. The disordered stretch occupies residues 515–542 (KKPKQEPEVEKASQRIPLQPHGPGLGSS). Over residues 517-527 (PKQEPEVEKAS) the composition is skewed to basic and acidic residues.

This sequence belongs to the major facilitator (TC 2.A.1) superfamily. Organic cation transporter (TC 2.A.1.19) family.

The protein resides in the basolateral cell membrane. It catalyses the reaction estrone 3-sulfate(out) + glutarate(in) = estrone 3-sulfate(in) + glutarate(out). The enzyme catalyses estrone 3-sulfate(in) + 2-oxoglutarate(out) = estrone 3-sulfate(out) + 2-oxoglutarate(in). The catalysed reaction is glutarate(in) + 2-oxoglutarate(out) = glutarate(out) + 2-oxoglutarate(in). It carries out the reaction urate(in) + 2-oxoglutarate(out) = urate(out) + 2-oxoglutarate(in). It catalyses the reaction taurocholate(out) + glutarate(in) = taurocholate(in) + glutarate(out). The enzyme catalyses dehydroepiandrosterone 3-sulfate(out) + glutarate(in) = dehydroepiandrosterone 3-sulfate(in) + glutarate(out). The catalysed reaction is prostaglandin F2alpha(out) + glutarate(in) = prostaglandin F2alpha(in) + glutarate(out). It carries out the reaction prostaglandin F2alpha(out) + 2-oxoglutarate(in) = prostaglandin F2alpha(in) + 2-oxoglutarate(out). It catalyses the reaction (R)-carnitine(out) + 2-oxoglutarate(in) = (R)-carnitine(in) + 2-oxoglutarate(out). The enzyme catalyses glutarate(in) + (R)-carnitine(out) = glutarate(out) + (R)-carnitine(in). The catalysed reaction is prostaglandin E2(out) + 2-oxoglutarate(in) = prostaglandin E2(in) + 2-oxoglutarate(out). It carries out the reaction prostaglandin E2(out) + glutarate(in) = prostaglandin E2(in) + glutarate(out). It catalyses the reaction urate(in) + glutarate(out) = urate(out) + glutarate(in). The enzyme catalyses taurocholate(out) + 2-oxoglutarate(in) = taurocholate(in) + 2-oxoglutarate(out). The catalysed reaction is dehydroepiandrosterone 3-sulfate(out) + 2-oxoglutarate(in) = dehydroepiandrosterone 3-sulfate(in) + 2-oxoglutarate(out). It carries out the reaction kynurenate(out) + a dicarboxylate(in) = kynurenate(in) + a dicarboxylate(out). It catalyses the reaction (indol-3-yl)acetate(out) + a dicarboxylate(in) = (indol-3-yl)acetate(in) + a dicarboxylate(out). The enzyme catalyses indoxyl sulfate(out) + a dicarboxylate(in) = indoxyl sulfate(in) + a dicarboxylate(out). The catalysed reaction is N-benzoylglycine(out) + a dicarboxylate(in) = N-benzoylglycine(in) + a dicarboxylate(out). It carries out the reaction 3-carboxy-4-methyl-5-propyl-2-furanpropanoate(out) + a dicarboxylate(in) = 3-carboxy-4-methyl-5-propyl-2-furanpropanoate(in) + a dicarboxylate(out). It catalyses the reaction (6R)-L-erythro-5,6,7,8-tetrahydrobiopterin(out) + a dicarboxylate(in) = (6R)-L-erythro-5,6,7,8-tetrahydrobiopterin(in) + a dicarboxylate(out). The enzyme catalyses L-erythro-7,8-dihydrobiopterin(out) + a dicarboxylate(in) = L-erythro-7,8-dihydrobiopterin(in) + a dicarboxylate(out). The catalysed reaction is L-sepiapterin(out) + a dicarboxylate(in) = L-sepiapterin(in) + a dicarboxylate(out). Functions as an organic anion/dicarboxylate exchanger that couples organic anion uptake indirectly to the sodium gradient. Transports organic anions such as estrone 3-sulfate (E1S) and urate in exchange for dicarboxylates such as glutarate or ketoglutarate (2-oxoglutarate). Plays an important role in the excretion of endogenous and exogenous organic anions, especially from the kidney and the brain. E1S transport is pH- and chloride-dependent and may also involve E1S/cGMP exchange. Responsible for the transport of prostaglandin E2 (PGE2) and prostaglandin F2(alpha) (PGF2(alpha)) in the basolateral side of the renal tubule. Involved in the transport of neuroactive tryptophan metabolites kynurenate and xanthurenate. Functions as a biopterin transporters involved in the uptake and the secretion of coenzymes tetrahydrobiopterin (BH4), dihydrobiopterin (BH2) and sepiapterin to urine, thereby determining baseline levels of blood biopterins. May be involved in the basolateral transport of steviol, a metabolite of the popular sugar substitute stevioside. May participate in the detoxification/ renal excretion of drugs and xenobiotics, such as the histamine H(2)-receptor antagonists fexofenadine and cimetidine, the antibiotic benzylpenicillin (PCG), the anionic herbicide 2,4-dichloro-phenoxyacetate (2,4-D), the diagnostic agent p-aminohippurate (PAH), the antiviral acyclovir (ACV), and the mycotoxin ochratoxin (OTA), by transporting these exogenous organic anions across the cell membrane in exchange for dicarboxylates such as 2-oxoglutarate. Contributes to the renal uptake of potent uremic toxins (indoxyl sulfate (IS), indole acetate (IA), hippurate/N-benzoylglycine (HA) and 3-carboxy-4-methyl-5-propyl-2-furanpropionate (CMPF)), pravastatin, PCG, E1S and dehydroepiandrosterone sulfate (DHEAS), and is partly involved in the renal uptake of temocaprilat (an angiotensin-converting enzyme (ACE) inhibitor). May contribute to the release of cortisol in the adrenals. Involved in one of the detoxification systems on the choroid plexus (CP), removes substrates such as E1S or taurocholate (TC), PCG, 2,4-D and PAH, from the cerebrospinal fluid (CSF) to the blood for eventual excretion in urine and bile. Also contributes to the uptake of several other organic compounds such as the prostanoids prostaglandin E(2) and prostaglandin F(2-alpha), L-carnitine, and the therapeutic drugs allopurinol, 6-mercaptopurine (6-MP) and 5-fluorouracil (5-FU). Mediates the transport of PAH, PCG, and the statins pravastatin and pitavastatin, from the cerebrum into the blood circulation across the blood-brain barrier (BBB). In summary, plays a role in the efflux of drugs and xenobiotics, helping reduce their undesired toxicological effects on the body. The polypeptide is Organic anion transporter 3 (SLC22A8) (Pongo abelii (Sumatran orangutan)).